The primary structure comprises 69 residues: Large ribosomal subunit protein bL31 (69 aa).

Zn(2+) contacts are provided by Cys-16, Cys-18, Cys-36, and Cys-39.

This sequence belongs to the bacterial ribosomal protein bL31 family. Type A subfamily. In terms of assembly, part of the 50S ribosomal subunit. The cofactor is Zn(2+).

Its function is as follows. Binds the 23S rRNA. The chain is Large ribosomal subunit protein bL31 from Kosmotoga olearia (strain ATCC BAA-1733 / DSM 21960 / TBF 19.5.1).